We begin with the raw amino-acid sequence, 91 residues long: MANTPSAKKRAKQAEKRRSHNASLRSMVRTYIKNVVKAIDAKDLAKAQAAFTAAVPVIDRMADKGIIHKNKAARHKSRLSGHIKALSTAAA.

The tract at residues 1–23 (MANTPSAKKRAKQAEKRRSHNAS) is disordered. Residues 7–20 (AKKRAKQAEKRRSH) are compositionally biased toward basic residues.

It belongs to the bacterial ribosomal protein bS20 family.

Its function is as follows. Binds directly to 16S ribosomal RNA. This is Small ribosomal subunit protein bS20 from Pseudomonas paraeruginosa (strain DSM 24068 / PA7) (Pseudomonas aeruginosa (strain PA7)).